The primary structure comprises 393 residues: Acetylornithine aminotransferase (393 aa).

Pyridoxal 5'-phosphate-binding positions include 105–106 (GA) and F138. Residue R141 coordinates N(2)-acetyl-L-ornithine. A pyridoxal 5'-phosphate-binding site is contributed by 224 to 227 (DEVQ). K253 bears the N6-(pyridoxal phosphate)lysine mark. S281 contacts N(2)-acetyl-L-ornithine. A pyridoxal 5'-phosphate-binding site is contributed by T282.

The protein belongs to the class-III pyridoxal-phosphate-dependent aminotransferase family. ArgD subfamily. As to quaternary structure, homodimer. Pyridoxal 5'-phosphate serves as cofactor.

The protein resides in the cytoplasm. The catalysed reaction is N(2)-acetyl-L-ornithine + 2-oxoglutarate = N-acetyl-L-glutamate 5-semialdehyde + L-glutamate. Its pathway is amino-acid biosynthesis; L-arginine biosynthesis; N(2)-acetyl-L-ornithine from L-glutamate: step 4/4. The protein is Acetylornithine aminotransferase of Haemophilus ducreyi (strain 35000HP / ATCC 700724).